A 279-amino-acid polypeptide reads, in one-letter code: Thymidylate synthase (279 aa).

Arginine 21 is a binding site for dUMP. Histidine 51 is a binding site for (6R)-5,10-methylene-5,6,7,8-tetrahydrofolate. 126-127 contributes to the dUMP binding site; that stretch reads RR. Catalysis depends on cysteine 159, which acts as the Nucleophile. Residues 179-182, asparagine 190, and 220-222 contribute to the dUMP site; these read RSAD and HLY. (6R)-5,10-methylene-5,6,7,8-tetrahydrofolate is bound at residue aspartate 182. Residue alanine 278 participates in (6R)-5,10-methylene-5,6,7,8-tetrahydrofolate binding.

This sequence belongs to the thymidylate synthase family. Bacterial-type ThyA subfamily. In terms of assembly, homodimer.

The protein localises to the cytoplasm. The catalysed reaction is dUMP + (6R)-5,10-methylene-5,6,7,8-tetrahydrofolate = 7,8-dihydrofolate + dTMP. The protein operates within pyrimidine metabolism; dTTP biosynthesis. Its function is as follows. Catalyzes the reductive methylation of 2'-deoxyuridine-5'-monophosphate (dUMP) to 2'-deoxythymidine-5'-monophosphate (dTMP) while utilizing 5,10-methylenetetrahydrofolate (mTHF) as the methyl donor and reductant in the reaction, yielding dihydrofolate (DHF) as a by-product. This enzymatic reaction provides an intracellular de novo source of dTMP, an essential precursor for DNA biosynthesis. This chain is Thymidylate synthase, found in Marinobacter nauticus (strain ATCC 700491 / DSM 11845 / VT8) (Marinobacter aquaeolei).